The following is a 197-amino-acid chain: Peptide deformylase (197 aa).

Fe cation contacts are provided by Cys106 and His148. The active site involves Glu149. Fe cation is bound at residue His152.

This sequence belongs to the polypeptide deformylase family. It depends on Fe(2+) as a cofactor.

It carries out the reaction N-terminal N-formyl-L-methionyl-[peptide] + H2O = N-terminal L-methionyl-[peptide] + formate. In terms of biological role, removes the formyl group from the N-terminal Met of newly synthesized proteins. Requires at least a dipeptide for an efficient rate of reaction. N-terminal L-methionine is a prerequisite for activity but the enzyme has broad specificity at other positions. The sequence is that of Peptide deformylase from Mycobacteroides abscessus (strain ATCC 19977 / DSM 44196 / CCUG 20993 / CIP 104536 / JCM 13569 / NCTC 13031 / TMC 1543 / L948) (Mycobacterium abscessus).